The chain runs to 132 residues: Large ribosomal subunit protein uL14 (132 aa).

The protein belongs to the universal ribosomal protein uL14 family. As to quaternary structure, part of the 50S ribosomal subunit. Forms a cluster with proteins L3 and L24e, part of which may contact the 16S rRNA in 2 intersubunit bridges.

In terms of biological role, binds to 23S rRNA. Forms part of two intersubunit bridges in the 70S ribosome. The polypeptide is Large ribosomal subunit protein uL14 (Methanococcus maripaludis (strain C7 / ATCC BAA-1331)).